We begin with the raw amino-acid sequence, 481 residues long: Beta-1,3-glucan-binding protein (481 aa).

An N-terminal signal peptide occupies residues 1-18 (RCARVCAVLFLFIQISYG). The region spanning 20–120 (YQVPQVTVQA…LSFTVSALED (101 aa)) is the CBM39 domain. Residue N110 is glycosylated (N-linked (GlcNAc...) asparagine). The region spanning 124-481 (TGTGTDPVPT…LVDYVKVVAL (358 aa)) is the GH16 domain.

The protein belongs to the insect beta-1,3-glucan binding protein family.

It is found in the secreted. In terms of biological role, involved in the recognition of invading microorganisms. Binds specifically to beta-1,3-glucan and activates the phenoloxidase cascade. The sequence is that of Beta-1,3-glucan-binding protein from Hyphantria cunea (Fall webworm moth).